Here is a 463-residue protein sequence, read N- to C-terminus: Autophagy-related protein 36 (463 aa).

The RING-type; atypical zinc finger occupies 5 to 45; it reads CSICLEVLVDKEAFTEPCLHYYHNECIKEWTKRANTCPKCR. Residues 85–131 form a PHD-type zinc finger; the sequence is TNLCALCEDPSTSLIYCESCGGSFHFNCIGIGDELDSEWCCPLCGMF. The segment covering 229–242 has biased composition (polar residues); sequence TQNSQSSEFSTENN. The disordered stretch occupies residues 229–281; sequence TQNSQSSEFSTENNVVPLKNTHELGRKLKKPRRASGIKKNVVERSSSHQSTQI. The segment covering 255–264 has biased composition (basic residues); the sequence is KLKKPRRASG.

Interacts with ATG28.

Its function is as follows. Micropexophagy-specific protein required for efficient micropexophagic apparatus (MIPA) formation but not for general autophagy. This is Autophagy-related protein 36 (ATG35) from Komagataella phaffii (strain GS115 / ATCC 20864) (Yeast).